A 102-amino-acid polypeptide reads, in one-letter code: Small ribosomal subunit protein uS10 (102 aa).

It belongs to the universal ribosomal protein uS10 family. As to quaternary structure, part of the 30S ribosomal subunit.

Involved in the binding of tRNA to the ribosomes. The polypeptide is Small ribosomal subunit protein uS10 (Mycoplasma mobile (strain ATCC 43663 / 163K / NCTC 11711) (Mesomycoplasma mobile)).